A 203-amino-acid polypeptide reads, in one-letter code: Peptidyl-prolyl cis-trans isomerase FKBP11 (203 aa).

The first 29 residues, 1-29 (MTLRPSLLPLRLLLLLLLLLRGAVCQAEA), serve as a signal peptide directing secretion. Residues 59–146 (GDTLHIHYSG…HFDVELIALI (88 aa)) form the PPIase FKBP-type domain. Residues 158 to 178 (ILPLVGMAMVPALLGLIGYHL) form a helical membrane-spanning segment.

The protein belongs to the FKBP-type PPIase family. In terms of assembly, interacts with IFITM5.

Its subcellular location is the membrane. The catalysed reaction is [protein]-peptidylproline (omega=180) = [protein]-peptidylproline (omega=0). Functionally, PPIases accelerate the folding of proteins during protein synthesis. The sequence is that of Peptidyl-prolyl cis-trans isomerase FKBP11 (FKBP11) from Bos taurus (Bovine).